The sequence spans 127 residues: Major sperm protein 77/79 (127 aa).

Alanine 2 bears the N-acetylalanine mark. Residues 9–126 enclose the MSP domain; sequence DIQTQPGTKI…RRKNLPIEYN (118 aa).

Sperm.

The protein localises to the cell projection. Its subcellular location is the pseudopodium. It is found in the cytoplasm. It localises to the cytoskeleton. In terms of biological role, central component in molecular interactions underlying sperm crawling. Forms an extensive filament system that extends from sperm villipoda, along the leading edge of the pseudopod. This is Major sperm protein 77/79 (msp-77) from Caenorhabditis elegans.